Reading from the N-terminus, the 27-residue chain is Pyruvate dehydrogenase protein X component, mitochondrial (27 aa).

The tract at residues 1–27 (FRLSPAARNILEKHSLDASQGTATGPR) is disordered. A Peripheral subunit-binding (PSBD) domain is found at 2 to 27 (RLSPAARNILEKHSLDASQGTATGPR). Lys-13 is subject to N6-acetyllysine. A Phosphoserine modification is found at Ser-15. Over residues 17–27 (DASQGTATGPR) the composition is skewed to polar residues.

The protein belongs to the 2-oxoacid dehydrogenase family. Part of the inner core of the multimeric pyruvate dehydrogenase complex that is composed of about 48 DLAT and 12 PDHX molecules. This core binds multiple copies of pyruvate dehydrogenase (subunits PDH1A and PDHB, E1), dihydrolipoamide acetyltransferase (DLAT, E2) and lipoamide dehydrogenase (DLD, E3). Interacts with SIRT4. Interacts with DLD.

The protein resides in the mitochondrion matrix. Required for anchoring dihydrolipoamide dehydrogenase (E3) to the dihydrolipoamide transacetylase (E2) core of the pyruvate dehydrogenase complexes of eukaryotes. This specific binding is essential for a functional PDH complex. This Mesocricetus auratus (Golden hamster) protein is Pyruvate dehydrogenase protein X component, mitochondrial.